Reading from the N-terminus, the 473-residue chain is Flagellum-specific ATP synthase (473 aa).

187–194 (AGSGVGKS) contacts ATP.

This sequence belongs to the ATPase alpha/beta chains family.

It localises to the cytoplasm. It carries out the reaction ATP + H2O + 4 H(+)(in) = ADP + phosphate + 5 H(+)(out). Probable catalytic subunit of a protein translocase for flagellum-specific export, or a proton translocase involved in local circuits at the flagellum. The protein is Flagellum-specific ATP synthase (fliI) of Agrobacterium fabrum (strain C58 / ATCC 33970) (Agrobacterium tumefaciens (strain C58)).